A 608-amino-acid chain; its full sequence is 1-phosphatidylinositol 4,5-bisphosphate phosphodiesterase zeta-1 (608 aa).

Residues 35 to 70 form the EF-hand domain; the sequence is CSYIHVKQIFKDNDRLKQGRITIEEFRAIYRIITHR. The region spanning 155–299 is the PI-PLC X-box domain; that stretch reads QDMTHPLNDY…LKFKILVKNK (145 aa). Residues histidine 170 and histidine 215 contribute to the active site. A disordered region spans residues 305-324; the sequence is KETHERKGSDKRGDNQDKET. Residues 349 to 465 enclose the PI-PLC Y-box domain; that stretch reads LSDLVIYTKA…GYILKPHFLR (117 aa). The region spanning 465 to 589 is the C2 domain; the sequence is RESKSYFNPS…KGYRRIPLFS (125 aa).

Interacts via its C2 domain with PtdIns(3)P and, to a lesser extent, PtdIns(5)P in vitro. Requires Ca(2+) as cofactor. Expressed specifically in testis and sperm. Weakly expressed in pancreatic-duct cells. Up-regulated in pancreatic-duct cells from patients with cystic fibrosis.

The protein resides in the nucleus. It localises to the cytoplasm. Its subcellular location is the perinuclear region. It catalyses the reaction a 1,2-diacyl-sn-glycero-3-phospho-(1D-myo-inositol-4,5-bisphosphate) + H2O = 1D-myo-inositol 1,4,5-trisphosphate + a 1,2-diacyl-sn-glycerol + H(+). The production of the second messenger molecules diacylglycerol (DAG) and inositol 1,4,5-trisphosphate (IP3) is mediated by activated phosphatidylinositol-specific phospholipase C enzymes. In vitro, hydrolyzes PtdIns(4,5)P2 in a Ca(2+)-dependent manner. Triggers intracellular Ca(2+) oscillations in oocytes solely during M phase and is involved in inducing oocyte activation and initiating embryonic development up to the blastocyst stage. Is therefore a strong candidate for the egg-activating soluble sperm factor that is transferred from the sperm into the egg cytoplasm following gamete membrane fusion. May exert an inhibitory effect on phospholipase-C-coupled processes that depend on calcium ions and protein kinase C, including CFTR trafficking and function. The protein is 1-phosphatidylinositol 4,5-bisphosphate phosphodiesterase zeta-1 of Homo sapiens (Human).